The following is a 444-amino-acid chain: Phosphoribosylamine--glycine ligase (444 aa).

Positions arginine 109–asparagine 324 constitute an ATP-grasp domain. Leucine 140–threonine 202 contributes to the ATP binding site. Glutamine 282, glutamate 294, and asparagine 296 together coordinate Mg(2+). Mn(2+) contacts are provided by glutamine 282, glutamate 294, and asparagine 296.

This sequence belongs to the GARS family. It depends on Mg(2+) as a cofactor. Mn(2+) serves as cofactor.

The catalysed reaction is 5-phospho-beta-D-ribosylamine + glycine + ATP = N(1)-(5-phospho-beta-D-ribosyl)glycinamide + ADP + phosphate + H(+). It participates in purine metabolism; IMP biosynthesis via de novo pathway; N(1)-(5-phospho-D-ribosyl)glycinamide from 5-phospho-alpha-D-ribose 1-diphosphate: step 2/2. The polypeptide is Phosphoribosylamine--glycine ligase (Methanocaldococcus jannaschii (strain ATCC 43067 / DSM 2661 / JAL-1 / JCM 10045 / NBRC 100440) (Methanococcus jannaschii)).